Here is a 634-residue protein sequence, read N- to C-terminus: Phototropic-responsive NPH3 family protein NPY2 (634 aa).

Positions 29–97 constitute a BTB domain; that stretch reads SDISVDVEGS…CYGMTVTLSA (69 aa). The NPH3 domain maps to 207 to 488; sequence DWWVEDLCEL…VQVLFFEQVR (282 aa). Y429 carries the post-translational modification Phosphotyrosine. 2 disordered regions span residues 492–517 and 584–634; these read SSGSSTPDLPRGMGRELRSCGTYGSS and QLQS…VSVS. The span at 588-602 shows a compositional bias: gly residues; sequence KGGGEKNNGGGGGGS. The segment covering 619–634 has biased composition (polar residues); sequence KTATPSRNLTRRVSVS.

Belongs to the NPH3 family. Specifically expressed in the hypophysis and the root meristems in the embryos. Highly expressed in primary root tips and radicles.

It is found in the cell membrane. It localises to the cytoplasm. Its subcellular location is the cytosol. Its pathway is protein modification; protein ubiquitination. Its function is as follows. May act as a substrate-specific adapter of an E3 ubiquitin-protein ligase complex (CUL3-RBX1-BTB) which mediates the ubiquitination and subsequent proteasomal degradation of target proteins. Plays an essential role in auxin-mediated organogenesis and in root gravitropic responses through the control of PIN proteins (e.g. PIN1 and PIN2) polarity in the root tip endodermal cell layer and in shoot epidermis. Recruited to the plasma membrane by PINs (e.g. PIN1 and PIN2) and, in concert with AGC kinases-mediated (e.g. D6PK and PID) PINs phosphorylation, maintains their polarity through limiting lateral diffusion-based escape. The chain is Phototropic-responsive NPH3 family protein NPY2 from Arabidopsis thaliana (Mouse-ear cress).